Here is an 87-residue protein sequence, read N- to C-terminus: Neurotoxin Cex4 (87 aa).

Residues 1 to 19 form the signal peptide; that stretch reads MNSLLMITACLFLIGTVWA. Residues 20–85 enclose the LCN-type CS-alpha/beta domain; that stretch reads KEGYLVNKST…TYPLPNKSCG (66 aa). 4 cysteine pairs are disulfide-bonded: cysteine 31-cysteine 84, cysteine 35-cysteine 60, cysteine 44-cysteine 65, and cysteine 48-cysteine 67. Cysteine 84 bears the Cysteine amide mark. A propeptide spanning residues 85–87 is cleaved from the precursor; the sequence is GRK.

The protein belongs to the long (4 C-C) scorpion toxin superfamily. Sodium channel inhibitor family. Beta subfamily. Expressed by the venom gland.

The protein localises to the secreted. Beta toxins bind voltage-independently at site-4 of sodium channels (Nav) and shift the voltage of activation toward more negative potentials thereby affecting sodium channel activation and promoting spontaneous and repetitive firing. The sequence is that of Neurotoxin Cex4 from Centruroides exilicauda (Bark scorpion).